A 254-amino-acid polypeptide reads, in one-letter code: Gamma-glutamyl-gamma-aminobutyrate hydrolase (254 aa).

The Glutamine amidotransferase type-1 domain occupies 16 to 250 (RNRLKGHATQ…ITAWQHHIAE (235 aa)). Cysteine 114 (nucleophile) is an active-site residue. Active-site residues include histidine 222 and glutamate 224.

The protein belongs to the peptidase C26 family.

It carries out the reaction 4-(gamma-L-glutamylamino)butanoate + H2O = 4-aminobutanoate + L-glutamate. It functions in the pathway amine and polyamine degradation; putrescine degradation; 4-aminobutanoate from putrescine: step 4/4. Functionally, involved in the breakdown of putrescine via hydrolysis of the gamma-glutamyl linkage of gamma-glutamyl-gamma-aminobutyrate. This Shigella flexneri protein is Gamma-glutamyl-gamma-aminobutyrate hydrolase (puuD).